Reading from the N-terminus, the 72-residue chain is Holocyclotoxin-1 (72 aa).

Residues 1 to 22 form the signal peptide; sequence MSKVTTVFIGALVLLLLIENGF. 4 cysteine pairs are disulfide-bonded: C24-C40, C32-C57, C36-C60, and C42-C70.

As to expression, expressed in salivary glands.

It is found in the secreted. In terms of biological role, probable neurotoxin. This Ixodes holocyclus (Australian paralysis tick) protein is Holocyclotoxin-1.